A 337-amino-acid polypeptide reads, in one-letter code: UPF0252 protein PH1321 (337 aa).

The helical transmembrane segment at 100-120 (IIGMLFLVFIILPAITSNLWS) threads the bilayer.

This sequence belongs to the UPF0252 family.

The protein localises to the membrane. This Pyrococcus horikoshii (strain ATCC 700860 / DSM 12428 / JCM 9974 / NBRC 100139 / OT-3) protein is UPF0252 protein PH1321.